The chain runs to 211 residues: MFITFEGIDGCGKTTQAVLLAKYLSDLYGEHRVVLTREPGGTSLNELIRGALLGLTDYKLDGITELMLFIAMRRESFVKVVLPGLLAGKIVISDRFTDSTVAYQGYGCGVDLALVGMLNSLVADVVPDITFVIDASIELALARTSLNGFENHGPEFYDRVREGFRTIVANNPHRCHMIDCKSDAAEDVYSTHDRIVALFRAITKDKLKVAK.

7–14 (GIDGCGKT) contributes to the ATP binding site.

It belongs to the thymidylate kinase family.

It carries out the reaction dTMP + ATP = dTDP + ADP. Its function is as follows. Phosphorylation of dTMP to form dTDP in both de novo and salvage pathways of dTTP synthesis. The sequence is that of Thymidylate kinase from Anaplasma marginale (strain Florida).